The following is an 873-amino-acid chain: DNA mismatch repair protein MutS (873 aa).

620 to 627 (GPNMAGKS) is a binding site for ATP.

This sequence belongs to the DNA mismatch repair MutS family.

Its function is as follows. This protein is involved in the repair of mismatches in DNA. It is possible that it carries out the mismatch recognition step. This protein has a weak ATPase activity. The protein is DNA mismatch repair protein MutS of Ruminiclostridium cellulolyticum (strain ATCC 35319 / DSM 5812 / JCM 6584 / H10) (Clostridium cellulolyticum).